Reading from the N-terminus, the 745-residue chain is Elongation factor G, mitochondrial (745 aa).

Residues 40–317 form the tr-type G domain; it reads ERIRNIGISA…AVLDYLPNPG (278 aa). Residues 49–56, 116–120, and 170–173 contribute to the GTP site; these read AHIDSGKT, DTPGH, and NKLD.

It belongs to the TRAFAC class translation factor GTPase superfamily. Classic translation factor GTPase family. EF-G/EF-2 subfamily.

It is found in the mitochondrion. Its pathway is protein biosynthesis; polypeptide chain elongation. In terms of biological role, mitochondrial GTPase that catalyzes the GTP-dependent ribosomal translocation step during translation elongation. During this step, the ribosome changes from the pre-translocational (PRE) to the post-translocational (POST) state as the newly formed A-site-bound peptidyl-tRNA and P-site-bound deacylated tRNA move to the P and E sites, respectively. Catalyzes the coordinated movement of the two tRNA molecules, the mRNA and conformational changes in the ribosome. Essential during development as it acts as a retrograde signal from mitochondria to the nucleus to slow down cell proliferation if mitochondrial energy output is low. The sequence is that of Elongation factor G, mitochondrial from Drosophila erecta (Fruit fly).